The chain runs to 150 residues: Transcription antitermination protein NusB (150 aa).

It belongs to the NusB family.

Functionally, involved in transcription antitermination. Required for transcription of ribosomal RNA (rRNA) genes. Binds specifically to the boxA antiterminator sequence of the ribosomal RNA (rrn) operons. The chain is Transcription antitermination protein NusB from Streptococcus pyogenes serotype M3 (strain ATCC BAA-595 / MGAS315).